The chain runs to 441 residues: Protein eva-1 homolog C (441 aa).

Positions 1–23 are disordered; it reads MLLPGPARQPPTPQPVQHPGLRR. Residues 1–48 form the signal peptide; sequence MLLPGPARQPPTPQPVQHPGLRRQVEPPGQLLRLFYCTVLVCSKEISA. Residues 7 to 16 show a composition bias toward pro residues; sequence ARQPPTPQPV. Residues 49 to 322 lie on the Extracellular side of the membrane; sequence LTDFSGYLTK…AYIRAHPERA (274 aa). Asn62 carries N-linked (GlcNAc...) asparagine glycosylation. The SUEL-type lectin 1 domain occupies 67 to 159; sequence ACDGDYLNLQ…KYLLVSFKCQ (93 aa). The N-linked (GlcNAc...) asparagine glycan is linked to Asn165. An SUEL-type lectin 2 domain is found at 168–260; it reads VCEDQELKLH…KYLTVTYACV (93 aa). A helical membrane pass occupies residues 323-343; the sequence is ALLFVSSVCIGLALTLCALVI. The Cytoplasmic segment spans residues 344–441; it reads RESCAKDFRD…SLPRNMGQFY (98 aa). The tract at residues 362 to 391 is disordered; it reads VPGSDKVEEDSEDEEEEEDSSESDFPGELS. The span at 368 to 383 shows a compositional bias: acidic residues; it reads VEEDSEDEEEEEDSSE.

It belongs to the EVA1 family.

The protein resides in the cell membrane. Functionally, binds heparin. This is Protein eva-1 homolog C (EVA1C) from Pan troglodytes (Chimpanzee).